Reading from the N-terminus, the 293-residue chain is Methylsterol monooxygenase 1 (293 aa).

Helical transmembrane passes span 55–75 and 100–120; these read LIVH…FQFI and VLLF…YYFT. Residues 145-274 enclose the Fatty acid hydroxylase domain; sequence CAVIEDTWHY…FTWWDRIFGT (130 aa). Positions 157–161 match the Histidine box-1 motif; the sequence is HRLLH. The Histidine box-2 motif lies at 170 to 174; the sequence is HKVHH. Residues 199–219 form a helical membrane-spanning segment; it reads FFIGIVLLCDHVILLWAWVTI. The short motif at 249-255 is the Histidine box-3 element; it reads HHDFHHM.

This sequence belongs to the sterol desaturase family. Fe cation serves as cofactor. Ubiquitinated by MARCHF6, leading to proteasomal degradation.

It is found in the endoplasmic reticulum membrane. The catalysed reaction is 4,4-dimethyl-5alpha-cholest-7-en-3beta-ol + 6 Fe(II)-[cytochrome b5] + 3 O2 + 5 H(+) = 4alpha-carboxy-4beta-methyl-5alpha-cholest-7-ene-3beta-ol + 6 Fe(III)-[cytochrome b5] + 4 H2O. The enzyme catalyses 4,4-dimethyl-5alpha-cholesta-8,24-dien-3beta-ol + 6 Fe(II)-[cytochrome b5] + 3 O2 + 5 H(+) = 4beta-methylzymosterol-4alpha-carboxylate + 6 Fe(III)-[cytochrome b5] + 4 H2O. It catalyses the reaction 4alpha-methylzymosterol + 6 Fe(II)-[cytochrome b5] + 3 O2 + 5 H(+) = 4alpha-carboxyzymosterol + 6 Fe(III)-[cytochrome b5] + 4 H2O. It carries out the reaction 4alpha-methyl-5alpha-cholest-7-en-3beta-ol + 6 Fe(II)-[cytochrome b5] + 3 O2 + 5 H(+) = 4alpha-carboxy-5alpha-cholest-7-en-3beta-ol + 6 Fe(III)-[cytochrome b5] + 4 H2O. The catalysed reaction is 4,4-dimethyl-5alpha-cholest-8-en-3beta-ol + 6 Fe(II)-[cytochrome b5] + 3 O2 + 5 H(+) = 4alpha-carboxy-4beta-methyl-5alpha-cholest-8-en-3beta-ol + 6 Fe(III)-[cytochrome b5] + 4 H2O. The enzyme catalyses 4alpha-methyl-5alpha-cholest-8-en-3beta-ol + 6 Fe(II)-[cytochrome b5] + 3 O2 + 5 H(+) = 4alpha-carboxy-5alpha-cholest-8-ene-3beta-ol + 6 Fe(III)-[cytochrome b5] + 4 H2O. It participates in steroid biosynthesis; zymosterol biosynthesis; zymosterol from lanosterol: step 3/6. The protein operates within steroid biosynthesis; cholesterol biosynthesis. Functionally, catalyzes the three-step monooxygenation required for the demethylation of 4,4-dimethyl and 4alpha-methylsterols, which can be subsequently metabolized to cholesterol. The chain is Methylsterol monooxygenase 1 (MSMO1) from Macaca fascicularis (Crab-eating macaque).